A 523-amino-acid chain; its full sequence is 2-isopropylmalate synthase (523 aa).

The Pyruvate carboxyltransferase domain occupies 5-267 (VIIFDTTLRD…HTNINHHEIW (263 aa)). Mn(2+)-binding residues include Asp14, His202, His204, and Asn238. Positions 392–523 (RLDYFSVQSG…QNKENNKETV (132 aa)) are regulatory domain.

The protein belongs to the alpha-IPM synthase/homocitrate synthase family. LeuA type 1 subfamily. As to quaternary structure, homodimer. Mn(2+) serves as cofactor.

It is found in the cytoplasm. The enzyme catalyses 3-methyl-2-oxobutanoate + acetyl-CoA + H2O = (2S)-2-isopropylmalate + CoA + H(+). Its pathway is amino-acid biosynthesis; L-leucine biosynthesis; L-leucine from 3-methyl-2-oxobutanoate: step 1/4. In terms of biological role, catalyzes the condensation of the acetyl group of acetyl-CoA with 3-methyl-2-oxobutanoate (2-ketoisovalerate) to form 3-carboxy-3-hydroxy-4-methylpentanoate (2-isopropylmalate). The sequence is that of 2-isopropylmalate synthase from Salmonella dublin (strain CT_02021853).